The following is a 436-amino-acid chain: Trigger factor (436 aa).

A PPIase FKBP-type domain is found at 163–248 (GDRVTLDFAG…VKEVAEGVLP (86 aa)).

Belongs to the FKBP-type PPIase family. Tig subfamily.

It is found in the cytoplasm. The enzyme catalyses [protein]-peptidylproline (omega=180) = [protein]-peptidylproline (omega=0). In terms of biological role, involved in protein export. Acts as a chaperone by maintaining the newly synthesized protein in an open conformation. Functions as a peptidyl-prolyl cis-trans isomerase. The protein is Trigger factor of Bordetella petrii (strain ATCC BAA-461 / DSM 12804 / CCUG 43448).